The following is a 269-amino-acid chain: MPELPEVETSRRGIEPHLVGATILHAVVRNGRLRWPVSEEIYRLSDQPVLSVQRRAKYLLLELPEGWIIIHLGMSGSLRILPEELPPEKHDHVDLVMSNGKVLRYTDPRRFGAWLWTKELEGHNVLAHLGPEPLSDDFNGEYLHQKCAKKKTAIKPWLMDNKLVVGVGNIYASESLFAAGIHPDRLASSLSLAECELLARVIKAVLLRSIEQGGTTLKDFLQSDGKPGYFAQELQVYGRKGEPCRVCGTPIVATKHAQRATFYCRQCQK.

The Schiff-base intermediate with DNA role is filled by Pro-2. Glu-3 acts as the Proton donor in catalysis. The active-site Proton donor; for beta-elimination activity is Lys-57. DNA-binding residues include His-90, Arg-109, and Lys-150. An FPG-type zinc finger spans residues 235–269; it reads QVYGRKGEPCRVCGTPIVATKHAQRATFYCRQCQK. The active-site Proton donor; for delta-elimination activity is Arg-259.

Belongs to the FPG family. As to quaternary structure, monomer. The cofactor is Zn(2+).

The enzyme catalyses Hydrolysis of DNA containing ring-opened 7-methylguanine residues, releasing 2,6-diamino-4-hydroxy-5-(N-methyl)formamidopyrimidine.. It catalyses the reaction 2'-deoxyribonucleotide-(2'-deoxyribose 5'-phosphate)-2'-deoxyribonucleotide-DNA = a 3'-end 2'-deoxyribonucleotide-(2,3-dehydro-2,3-deoxyribose 5'-phosphate)-DNA + a 5'-end 5'-phospho-2'-deoxyribonucleoside-DNA + H(+). In terms of biological role, involved in base excision repair of DNA damaged by oxidation or by mutagenic agents. Acts as a DNA glycosylase that recognizes and removes damaged bases. Has a preference for oxidized purines, such as 7,8-dihydro-8-oxoguanine (8-oxoG). Has AP (apurinic/apyrimidinic) lyase activity and introduces nicks in the DNA strand. Cleaves the DNA backbone by beta-delta elimination to generate a single-strand break at the site of the removed base with both 3'- and 5'-phosphates. This is Formamidopyrimidine-DNA glycosylase from Escherichia coli O157:H7.